We begin with the raw amino-acid sequence, 479 residues long: Cruciferin PGCRURSE5 (479 aa).

Residues M1–A23 form the signal peptide. Cystine bridges form between C37-C70 and C113-C296. A Cupin type-1 1 domain is found at L42–Q241. Residue T116 is modified to Phosphothreonine. 3 disordered regions span residues F117–D144, R196–N219, and Y271–L291. A compositionally biased stretch (low complexity) spans Q124–G141. The region spanning E302 to R451 is the Cupin type-1 2 domain. A phosphothreonine mark is found at T415 and T440.

The protein belongs to the 11S seed storage protein (globulins) family. As to quaternary structure, hexamer; each subunit is composed of an acidic and a basic chain derived from a single precursor and linked by a disulfide bond.

In terms of biological role, this is a seed storage protein. In Raphanus sativus (Radish), this protein is Cruciferin PGCRURSE5 (CRURS).